Consider the following 125-residue polypeptide: Small ribosomal subunit protein uS13 (125 aa).

Residues 95 to 125 (GLPVRGQRTKNNCRTRKGKRKTVANKKKATK) are disordered.

This sequence belongs to the universal ribosomal protein uS13 family. In terms of assembly, part of the 30S ribosomal subunit. Forms a loose heterodimer with protein S19. Forms two bridges to the 50S subunit in the 70S ribosome.

Functionally, located at the top of the head of the 30S subunit, it contacts several helices of the 16S rRNA. In the 70S ribosome it contacts the 23S rRNA (bridge B1a) and protein L5 of the 50S subunit (bridge B1b), connecting the 2 subunits; these bridges are implicated in subunit movement. Contacts the tRNAs in the A and P-sites. In Cytophaga hutchinsonii (strain ATCC 33406 / DSM 1761 / CIP 103989 / NBRC 15051 / NCIMB 9469 / D465), this protein is Small ribosomal subunit protein uS13.